Reading from the N-terminus, the 153-residue chain is Catabolic 3-dehydroquinase (153 aa).

Catalysis depends on Y24, which acts as the Proton acceptor. Positions 75, 81, and 88 each coordinate substrate. The active-site Proton donor is H101. Substrate contacts are provided by residues 102-103 and R112; that span reads VS.

Belongs to the type-II 3-dehydroquinase family. In terms of assembly, homododecamer. Adopts a ring-like structure, composed of an arrangement of two hexameric rings stacked on top of one another.

It carries out the reaction 3-dehydroquinate = 3-dehydroshikimate + H2O. It functions in the pathway aromatic compound metabolism; 3,4-dihydroxybenzoate biosynthesis; 3,4-dihydroxybenzoate from 3-dehydroquinate: step 1/2. Is involved in the catabolism of quinate. Allows the utilization of quinate as carbon source via the beta-ketoadipate pathway. This chain is Catabolic 3-dehydroquinase, found in Aspergillus oryzae (strain ATCC 42149 / RIB 40) (Yellow koji mold).